Consider the following 447-residue polypeptide: ATP-dependent protease ATPase subunit HslU (447 aa).

ATP-binding positions include I17, 59 to 64 (GVGKTE), D256, E321, and R393.

This sequence belongs to the ClpX chaperone family. HslU subfamily. In terms of assembly, a double ring-shaped homohexamer of HslV is capped on each side by a ring-shaped HslU homohexamer. The assembly of the HslU/HslV complex is dependent on binding of ATP.

The protein resides in the cytoplasm. In terms of biological role, ATPase subunit of a proteasome-like degradation complex; this subunit has chaperone activity. The binding of ATP and its subsequent hydrolysis by HslU are essential for unfolding of protein substrates subsequently hydrolyzed by HslV. HslU recognizes the N-terminal part of its protein substrates and unfolds these before they are guided to HslV for hydrolysis. The chain is ATP-dependent protease ATPase subunit HslU from Pseudomonas putida (strain ATCC 47054 / DSM 6125 / CFBP 8728 / NCIMB 11950 / KT2440).